The sequence spans 662 residues: DNA ligase (662 aa).

Residues 31 to 35 (DYEYD), 80 to 81 (SL), and glutamate 109 each bind NAD(+). The active-site N6-AMP-lysine intermediate is lysine 111. The NAD(+) site is built by arginine 132, glutamate 166, lysine 282, and lysine 306. The Zn(2+) site is built by cysteine 400, cysteine 403, cysteine 418, and cysteine 423. One can recognise a BRCT domain in the interval 581-662 (KVNNIFEGKT…FEEMLKGENI (82 aa)).

Belongs to the NAD-dependent DNA ligase family. LigA subfamily. Mg(2+) serves as cofactor. The cofactor is Mn(2+).

It catalyses the reaction NAD(+) + (deoxyribonucleotide)n-3'-hydroxyl + 5'-phospho-(deoxyribonucleotide)m = (deoxyribonucleotide)n+m + AMP + beta-nicotinamide D-nucleotide.. Functionally, DNA ligase that catalyzes the formation of phosphodiester linkages between 5'-phosphoryl and 3'-hydroxyl groups in double-stranded DNA using NAD as a coenzyme and as the energy source for the reaction. It is essential for DNA replication and repair of damaged DNA. The protein is DNA ligase of Thermoanaerobacter pseudethanolicus (strain ATCC 33223 / 39E) (Clostridium thermohydrosulfuricum).